A 317-amino-acid polypeptide reads, in one-letter code: sn-1-specific diacylglycerol lipase ABHD11 (317 aa).

Residues 1–20 (MSNFAMSALCRVFTRGAPCG) constitute a mitochondrion transit peptide. The AB hydrolase-1 domain maps to 69–304 (PLVFLHGLFG…ASHWIHADKP (236 aa)). Residues serine 142, glutamate 238, and histidine 297 each act as charge relay system in the active site.

This sequence belongs to the AB hydrolase superfamily. In terms of processing, phosphorylated.

It is found in the mitochondrion. It localises to the mitochondrion matrix. The enzyme catalyses 1-octadecanoyl-2-(5Z,8Z,11Z,14Z-eicosatetraenoyl)-sn-glycerol + H2O = 2-(5Z,8Z,11Z,14Z-eicosatetraenoyl)-glycerol + octadecanoate + H(+). The catalysed reaction is a 1,2-diacyl-sn-glycerol + H2O = a 2-acylglycerol + a fatty acid + H(+). It catalyses the reaction a 1,3-diacyl-sn-glycerol + H2O = a 1-acyl-sn-glycerol + a fatty acid + H(+). It carries out the reaction 1-octadecanoyl-2-(9Z-octadecenoyl)-sn-glycerol + H2O = 2-(9Z-octadecenoyl)-glycerol + octadecanoate + H(+). The enzyme catalyses 1-octadecanoyl-2-(4Z,7Z,10Z,13Z,16Z,19Z-docosahexaenoyl)-sn-glycerol + H2O = 2-(4Z,7Z,10Z,13Z,16Z,19Z-docosahexaenoyl)-glycerol + octadecanoate + H(+). The catalysed reaction is 1,2-didecanoylglycerol + H2O = decanoylglycerol + decanoate + H(+). In terms of biological role, catalyzes the hydrolysis of diacylglycerol in vitro and may function as a key regulator in lipid metabolism, namely by regulating the intracellular levels of diacylglycerol. 1,2-diacyl-sn-glycerols are the preferred substrate over 1,3-diacyl-sn-glycerols. The enzyme hydrolyzes stearate in preference to palmitate from the sn-1 position of 1,2-diacyl-sn-glycerols. This chain is sn-1-specific diacylglycerol lipase ABHD11, found in Danio rerio (Zebrafish).